The sequence spans 384 residues: tRNA-specific 2-thiouridylase MnmA (384 aa).

Residues 18-25 (AMSGGVDS) and L44 contribute to the ATP site. Residue C112 is the Nucleophile of the active site. A disulfide bond links C112 and C209. G136 is an ATP binding site. An interaction with tRNA region spans residues 159–161 (RDQ). The active-site Cysteine persulfide intermediate is C209.

This sequence belongs to the MnmA/TRMU family.

The protein resides in the cytoplasm. The catalysed reaction is S-sulfanyl-L-cysteinyl-[protein] + uridine(34) in tRNA + AH2 + ATP = 2-thiouridine(34) in tRNA + L-cysteinyl-[protein] + A + AMP + diphosphate + H(+). Functionally, catalyzes the 2-thiolation of uridine at the wobble position (U34) of tRNA, leading to the formation of s(2)U34. The protein is tRNA-specific 2-thiouridylase MnmA of Methylobacterium radiotolerans (strain ATCC 27329 / DSM 1819 / JCM 2831 / NBRC 15690 / NCIMB 10815 / 0-1).